Consider the following 708-residue polypeptide: Phosphate acetyltransferase (708 aa).

A phosphate acetyltransferase region spans residues 388–708 (EFCYNLKLLS…TIALTSIQSE (321 aa)).

It in the N-terminal section; belongs to the CobB/CobQ family. In the C-terminal section; belongs to the phosphate acetyltransferase and butyryltransferase family. Homohexamer.

Its subcellular location is the cytoplasm. It carries out the reaction acetyl-CoA + phosphate = acetyl phosphate + CoA. It participates in metabolic intermediate biosynthesis; acetyl-CoA biosynthesis; acetyl-CoA from acetate: step 2/2. Functionally, involved in acetate metabolism. The polypeptide is Phosphate acetyltransferase (pta) (Buchnera aphidicola subsp. Acyrthosiphon pisum (strain APS) (Acyrthosiphon pisum symbiotic bacterium)).